Here is a 430-residue protein sequence, read N- to C-terminus: Phosphomethylpyrimidine synthase (430 aa).

Substrate contacts are provided by residues asparagine 67, methionine 96, tyrosine 125, histidine 161, 183–185, 224–227, and glutamate 263; these read SRG and DALR. Residue histidine 267 coordinates Zn(2+). Tyrosine 290 serves as a coordination point for substrate. Histidine 331 is a binding site for Zn(2+). Cysteine 406, cysteine 409, and cysteine 413 together coordinate [4Fe-4S] cluster.

This sequence belongs to the ThiC family. As to quaternary structure, homodimer. [4Fe-4S] cluster serves as cofactor.

It catalyses the reaction 5-amino-1-(5-phospho-beta-D-ribosyl)imidazole + S-adenosyl-L-methionine = 4-amino-2-methyl-5-(phosphooxymethyl)pyrimidine + CO + 5'-deoxyadenosine + formate + L-methionine + 3 H(+). Its pathway is cofactor biosynthesis; thiamine diphosphate biosynthesis. In terms of biological role, catalyzes the synthesis of the hydroxymethylpyrimidine phosphate (HMP-P) moiety of thiamine from aminoimidazole ribotide (AIR) in a radical S-adenosyl-L-methionine (SAM)-dependent reaction. The chain is Phosphomethylpyrimidine synthase from Campylobacter jejuni (strain RM1221).